Reading from the N-terminus, the 227-residue chain is Cytochrome c oxidase subunit 2 (227 aa).

The Mitochondrial intermembrane portion of the chain corresponds to 1-14 (MAYPFQLGLQDATS). The chain crosses the membrane as a helical span at residues 15–45 (PIMEELTSFHDHTLMIVFLISSLVLYIILLM). Residues 46–59 (LTTKLTHTSTMDAQ) are Mitochondrial matrix-facing. Residues 60 to 87 (EVETIWTILPAVILILIALPSLRILYMM) form a helical membrane-spanning segment. At 88 to 227 (DEINNPALTV…HFENWSASMI (140 aa)) the chain is on the mitochondrial intermembrane side. Residues His-161, Cys-196, Glu-198, Cys-200, His-204, and Met-207 each coordinate Cu cation. Glu-198 provides a ligand contact to Mg(2+).

The protein belongs to the cytochrome c oxidase subunit 2 family. Component of the cytochrome c oxidase (complex IV, CIV), a multisubunit enzyme composed of 14 subunits. The complex is composed of a catalytic core of 3 subunits MT-CO1, MT-CO2 and MT-CO3, encoded in the mitochondrial DNA, and 11 supernumerary subunits COX4I, COX5A, COX5B, COX6A, COX6B, COX6C, COX7A, COX7B, COX7C, COX8 and NDUFA4, which are encoded in the nuclear genome. The complex exists as a monomer or a dimer and forms supercomplexes (SCs) in the inner mitochondrial membrane with NADH-ubiquinone oxidoreductase (complex I, CI) and ubiquinol-cytochrome c oxidoreductase (cytochrome b-c1 complex, complex III, CIII), resulting in different assemblies (supercomplex SCI(1)III(2)IV(1) and megacomplex MCI(2)III(2)IV(2)). Found in a complex with TMEM177, COA6, COX18, COX20, SCO1 and SCO2. Interacts with TMEM177 in a COX20-dependent manner. Interacts with COX20. Interacts with COX16. The cofactor is Cu cation.

The protein resides in the mitochondrion inner membrane. It catalyses the reaction 4 Fe(II)-[cytochrome c] + O2 + 8 H(+)(in) = 4 Fe(III)-[cytochrome c] + 2 H2O + 4 H(+)(out). Its function is as follows. Component of the cytochrome c oxidase, the last enzyme in the mitochondrial electron transport chain which drives oxidative phosphorylation. The respiratory chain contains 3 multisubunit complexes succinate dehydrogenase (complex II, CII), ubiquinol-cytochrome c oxidoreductase (cytochrome b-c1 complex, complex III, CIII) and cytochrome c oxidase (complex IV, CIV), that cooperate to transfer electrons derived from NADH and succinate to molecular oxygen, creating an electrochemical gradient over the inner membrane that drives transmembrane transport and the ATP synthase. Cytochrome c oxidase is the component of the respiratory chain that catalyzes the reduction of oxygen to water. Electrons originating from reduced cytochrome c in the intermembrane space (IMS) are transferred via the dinuclear copper A center (CU(A)) of subunit 2 and heme A of subunit 1 to the active site in subunit 1, a binuclear center (BNC) formed by heme A3 and copper B (CU(B)). The BNC reduces molecular oxygen to 2 water molecules using 4 electrons from cytochrome c in the IMS and 4 protons from the mitochondrial matrix. The protein is Cytochrome c oxidase subunit 2 (MT-CO2) of Anisomys imitator (Uneven-toothed rat).